Consider the following 122-residue polypeptide: Large ribosomal subunit protein uL14 (122 aa).

This sequence belongs to the universal ribosomal protein uL14 family. As to quaternary structure, part of the 50S ribosomal subunit. Forms a cluster with proteins L3 and L19. In the 70S ribosome, L14 and L19 interact and together make contacts with the 16S rRNA in bridges B5 and B8.

Functionally, binds to 23S rRNA. Forms part of two intersubunit bridges in the 70S ribosome. In Mycolicibacterium gilvum (strain PYR-GCK) (Mycobacterium gilvum (strain PYR-GCK)), this protein is Large ribosomal subunit protein uL14.